The sequence spans 148 residues: Large ribosomal subunit protein bL9 (148 aa).

The protein belongs to the bacterial ribosomal protein bL9 family.

Its function is as follows. Binds to the 23S rRNA. The protein is Large ribosomal subunit protein bL9 of Listeria innocua serovar 6a (strain ATCC BAA-680 / CLIP 11262).